The primary structure comprises 247 residues: Transcription factor otaR1 (247 aa).

Disordered stretches follow at residues 1-48 (MEPA…ETSM) and 100-143 (DNAS…PLGN). Positions 23–47 (DESSSTGLSLGSLLSSSNDLSSETS) are enriched in low complexity. Polar residues predominate over residues 134-143 (ANPTSVPLGN). The interval 156–196 (KKYHEKYKERNRVAAGKSRQKQVDLIELLQAEQREEERRRK) is basic motif. Residues 156–219 (KKYHEKYKER…LDLKQELQHH (64 aa)) enclose the bZIP domain. Positions 198-212 (LERELSQIHKELLDL) are leucine-zipper.

Its subcellular location is the nucleus. Its function is as follows. Transcription factor; part of the gene cluster that mediates the biosynthesis of ochratoxin A (OTA), a mycotoxin demonstrated to have nephrotoxic, immunotoxic, genotoxic, neurotoxic, and teratogenic properties. Positively regulates the expression of the cluster genes otaA, otaB, otaC and otaD, and the subsequent production of OTA. The polypeptide is Transcription factor otaR1 (Aspergillus carbonarius (strain ITEM 5010)).